The chain runs to 289 residues: ATP synthase subunit a (289 aa).

The next 6 membrane-spanning stretches (helical) occupy residues 43 to 63 (AFHVDTLGWSVALGLIFVLIF), 101 to 121 (SAVIAPLALTIFVWVFLMNAV), 160 to 180 (LSVFALIIFYSIKVKGIGGFI), 193 to 213 (LFVQALLIPVNFLLEFVTLIA), 232 to 252 (VFILIAVMFGSGLLWLSGLGV), and 259 to 279 (AVFHILIITLQAFIFMMLTIV).

The protein belongs to the ATPase A chain family. In terms of assembly, F-type ATPases have 2 components, CF(1) - the catalytic core - and CF(0) - the membrane proton channel. CF(1) has five subunits: alpha(3), beta(3), gamma(1), delta(1), epsilon(1). CF(0) has three main subunits: a(1), b(2) and c(9-12). The alpha and beta chains form an alternating ring which encloses part of the gamma chain. CF(1) is attached to CF(0) by a central stalk formed by the gamma and epsilon chains, while a peripheral stalk is formed by the delta and b chains.

The protein resides in the cell inner membrane. Functionally, key component of the proton channel; it plays a direct role in the translocation of protons across the membrane. This chain is ATP synthase subunit a, found in Pseudomonas savastanoi pv. phaseolicola (strain 1448A / Race 6) (Pseudomonas syringae pv. phaseolicola (strain 1448A / Race 6)).